The primary structure comprises 240 residues: Thiopurine S-methyltransferase (240 aa).

24–35 lines the S-adenosyl-L-methionine pocket; the sequence is WKEKWVTRHISF. A Phosphoserine modification is found at Ser34. Phe35 contacts substrate. Residue Lys53 is modified to N6-acetyllysine. Residues Leu64, Glu85, 129–130, and Arg147 contribute to the S-adenosyl-L-methionine site; that span reads SI.

The protein belongs to the class I-like SAM-binding methyltransferase superfamily. TPMT family. As to quaternary structure, monomer.

It localises to the cytoplasm. It carries out the reaction S-adenosyl-L-methionine + a thiopurine = S-adenosyl-L-homocysteine + a thiopurine S-methylether.. The enzyme catalyses mercaptopurine + S-adenosyl-L-methionine = 6-methylthiopurine + S-adenosyl-L-homocysteine + H(+). Its function is as follows. Catalyzes the S-methylation of thiopurine drugs such as 6-mercaptopurine (also called mercaptopurine, 6-MP or its brand name Purinethol) using S-adenosyl-L-methionine as the methyl donor. TPMT activity modulates the cytotoxic effects of thiopurine prodrugs. A natural substrate for this enzyme has yet to be identified. This is Thiopurine S-methyltransferase (Tpmt) from Mus musculus (Mouse).